A 275-amino-acid polypeptide reads, in one-letter code: Large ribosomal subunit protein uL2c (275 aa).

2 disordered regions span residues 1-30 (MAIH…QKQK) and 225-275 (MNPV…RRRK). The segment covering 21–30 (QAKSTPQKQK) has biased composition (polar residues).

The protein belongs to the universal ribosomal protein uL2 family. In terms of assembly, part of the 50S ribosomal subunit.

Its subcellular location is the plastid. It is found in the chloroplast. The polypeptide is Large ribosomal subunit protein uL2c (rpl2) (Illicium oligandrum (Star anise)).